The following is a 658-amino-acid chain: Interferon-induced GTP-binding protein Mx1 (658 aa).

Met-1 carries the post-translational modification N-acetylmethionine. Residues 1 to 20 (MVNSKGKITDSDPGSSHLLL) are disordered. Positions 65 to 338 (DLALPAIAVI…LITHICKTLP (274 aa)) constitute a Dynamin-type G domain. A G1 motif region spans residues 75-82 (GDQSSGKS). 75–82 (GDQSSGKS) contributes to the GTP binding site. Residues 100–102 (VTR) are G2 motif. A G3 motif region spans residues 176–179 (DLPG). GTP contacts are provided by residues 176-180 (DLPGI) and 245-248 (TKPD). Residues 245 to 248 (TKPD) form a G4 motif region. Residues 277-280 (KCRG) form a G5 motif region. The tract at residues 339 to 364 (LLENQIKENYEKITEELQKYGSDVPE) is bundle signaling element (BSE). The middle domain stretch occupies residues 364-531 (EEEHEKMFFL…HFQMEQIVYC (168 aa)). Residues 365-628 (EEHEKMFFLI…KDTHNWLLKE (264 aa)) form a stalk region. Residues 551 to 554 (KDRK) form a critical for lipid-binding region. The region spanning 570–658 (LSDIFEHLLA…ARRRLAKFPG (89 aa)) is the GED domain.

The protein belongs to the TRAFAC class dynamin-like GTPase superfamily. Dynamin/Fzo/YdjA family. In terms of assembly, homooligomer. Oligomerizes into multimeric filamentous or ring-like structures by virtue of its stalk domain. Oligomerization is critical for GTPase activity, protein stability, and recognition of viral target structures. Interacts with TRPC1, TRPC3, TRPC4, TRPC5, TRPC6 and TRPC7. Interacts with HSPA5. Interacts with TUBB/TUBB5. Interacts with DDX39A and DDX39B. In terms of processing, ISGylated.

It is found in the cytoplasm. It localises to the endoplasmic reticulum membrane. Its subcellular location is the perinuclear region. Functionally, interferon-induced dynamin-like GTPase with antiviral activity. The sequence is that of Interferon-induced GTP-binding protein Mx1 (MX1) from Eumetopias jubatus (Steller sea lion).